Consider the following 2095-residue polypeptide: Oxygen-regulated protein 1 (2095 aa).

2 Doublecortin domains span residues 35–117 and 157–236; these read KRIS…VDLD and RRLV…GNYD. Disordered stretches follow at residues 358–379, 643–688, 863–887, 1400–1430, and 1572–1595; these read GLSNNDEKNKKSSYPGKTDYGP, ENRK…GKIP, GAEVSEQHVTTRADPLASLKKPDFP, NKKKSISSDKEESRTSEEPRSITNSMTSSER, and SGYPCKASSNSHNDDSGQEKEPTR. The span at 1405–1419 shows a compositional bias: basic and acidic residues; it reads ISSDKEESRTSEEPR. Residues 1420–1430 show a composition bias toward polar residues; that stretch reads SITNSMTSSER. Residues 1583-1595 are compositionally biased toward basic and acidic residues; sequence HNDDSGQEKEPTR.

As to quaternary structure, interacts (via the doublecortin domains) with microtubules. Interacts with RP1L1. Interacts with MAK. As to expression, expressed in the cell bodies and inner segments of photoreceptors. Not found in liver, spleen, kidney, brain, thymus, muscle, heart, lung and testis.

Its subcellular location is the cytoplasm. It localises to the cytoskeleton. The protein resides in the cilium axoneme. It is found in the cell projection. The protein localises to the cilium. Its subcellular location is the photoreceptor outer segment. Microtubule-associated protein regulating the stability and length of the microtubule-based axoneme of photoreceptors. Required for the differentiation of photoreceptor cells, it plays a role in the organization of the outer segment of rod and cone photoreceptors ensuring the correct orientation and higher-order stacking of outer segment disks along the photoreceptor axoneme. The sequence is that of Oxygen-regulated protein 1 (Rp1) from Mus musculus (Mouse).